The following is a 263-amino-acid chain: Shikimate dehydrogenase (NADP(+)) (263 aa).

Shikimate-binding positions include 14-16 (SLS) and Thr60. Residue Lys64 is the Proton acceptor of the active site. Positions 85 and 100 each coordinate shikimate. NADP(+) is bound by residues 123–127 (GAGGA), 146–151 (NRTPQR), and Leu205. Tyr207 provides a ligand contact to shikimate. Gly228 contributes to the NADP(+) binding site.

This sequence belongs to the shikimate dehydrogenase family. As to quaternary structure, homodimer.

The catalysed reaction is shikimate + NADP(+) = 3-dehydroshikimate + NADPH + H(+). It functions in the pathway metabolic intermediate biosynthesis; chorismate biosynthesis; chorismate from D-erythrose 4-phosphate and phosphoenolpyruvate: step 4/7. Its function is as follows. Involved in the biosynthesis of the chorismate, which leads to the biosynthesis of aromatic amino acids. Catalyzes the reversible NADPH linked reduction of 3-dehydroshikimate (DHSA) to yield shikimate (SA). This chain is Shikimate dehydrogenase (NADP(+)), found in Thermus thermophilus (strain ATCC BAA-163 / DSM 7039 / HB27).